The following is a 205-amino-acid chain: Thiamine-phosphate synthase (205 aa).

4-amino-2-methyl-5-(diphosphooxymethyl)pyrimidine contacts are provided by residues 37–41 and N69; that span reads QVREK. Positions 70 and 89 each coordinate Mg(2+). S108 lines the 4-amino-2-methyl-5-(diphosphooxymethyl)pyrimidine pocket. A 2-[(2R,5Z)-2-carboxy-4-methylthiazol-5(2H)-ylidene]ethyl phosphate-binding site is contributed by 134 to 136; sequence TGS. K137 lines the 4-amino-2-methyl-5-(diphosphooxymethyl)pyrimidine pocket. 2-[(2R,5Z)-2-carboxy-4-methylthiazol-5(2H)-ylidene]ethyl phosphate-binding positions include G165 and 185 to 186; that span reads IS.

The protein belongs to the thiamine-phosphate synthase family. The cofactor is Mg(2+).

The enzyme catalyses 2-[(2R,5Z)-2-carboxy-4-methylthiazol-5(2H)-ylidene]ethyl phosphate + 4-amino-2-methyl-5-(diphosphooxymethyl)pyrimidine + 2 H(+) = thiamine phosphate + CO2 + diphosphate. The catalysed reaction is 2-(2-carboxy-4-methylthiazol-5-yl)ethyl phosphate + 4-amino-2-methyl-5-(diphosphooxymethyl)pyrimidine + 2 H(+) = thiamine phosphate + CO2 + diphosphate. It catalyses the reaction 4-methyl-5-(2-phosphooxyethyl)-thiazole + 4-amino-2-methyl-5-(diphosphooxymethyl)pyrimidine + H(+) = thiamine phosphate + diphosphate. It functions in the pathway cofactor biosynthesis; thiamine diphosphate biosynthesis; thiamine phosphate from 4-amino-2-methyl-5-diphosphomethylpyrimidine and 4-methyl-5-(2-phosphoethyl)-thiazole: step 1/1. Its function is as follows. Condenses 4-methyl-5-(beta-hydroxyethyl)thiazole monophosphate (THZ-P) and 2-methyl-4-amino-5-hydroxymethyl pyrimidine pyrophosphate (HMP-PP) to form thiamine monophosphate (TMP). The protein is Thiamine-phosphate synthase of Clostridium botulinum (strain Loch Maree / Type A3).